Here is an 859-residue protein sequence, read N- to C-terminus: DNA mismatch repair protein MutS (859 aa).

617–624 is a binding site for ATP; it reads GPNMGGKS. The segment at 799 to 821 is disordered; that stretch reads ETTSLPHEQPRAKPGKPAVPQQS.

The protein belongs to the DNA mismatch repair MutS family.

Its function is as follows. This protein is involved in the repair of mismatches in DNA. It is possible that it carries out the mismatch recognition step. This protein has a weak ATPase activity. The sequence is that of DNA mismatch repair protein MutS from Pseudomonas syringae pv. syringae (strain B728a).